A 315-amino-acid polypeptide reads, in one-letter code: p-hydroxyphenylacetate 3-hydroxylase, reductase component (315 aa).

The protein belongs to the non-flavoprotein flavin reductase family. As to quaternary structure, homodimer. The p-hydroxyphenylacetate 3-hydroxylase (HpaH) is composed of an oxygenase component C2 and a reductase component C1.

It carries out the reaction a reduced flavin + NAD(+) = an oxidized flavin + NADH + 2 H(+). The protein operates within aromatic compound metabolism; 4-hydroxyphenylacetate degradation; pyruvate and succinate semialdehyde from 4-hydroxyphenylacetate: step 1/7. Flavin concentrations greater than 15 uM do not inhibit the NADH oxidation activity of the reductase component C1 but do affect the hydroxylation activity of the C1-C2 complex. Maximal reductase activity is achieved only upon HPA binding to the reductase component C1 before interaction with NADH. HPA stimulates the rates of both the reduction of FMN and release of reduced FMN from the reductase component. In terms of biological role, reductase component of a two-component system that supplies reduced FMN (FMNH2) to the oxygenase component to catalyze the hydroxylation of 4-hydroxyphenylacetic acid, leading to the production of 3,4-dihydroxyphenylacetate (3,4-DHPA). Catalyzes the reduction of free flavins (FMN, FAD and riboflavin) by NADH. Subsequently, the reduced flavins diffuse to the oxygenase component C2. The protein is p-hydroxyphenylacetate 3-hydroxylase, reductase component of Acinetobacter baumannii.